The primary structure comprises 405 residues: MMYEKTAEHFEQKYKNLPEGHLLVNLGPSHPATHGILQNVIQIDGERIVEAESVIGYVHRCFEKLGERYTYNQFLVCTDRMNYVSTPLNNIGWILAVEKMMQIEVPDRVTYVRMIISELSRIIDHIICTGILGVDLGAFSGMLHLFHHRENIYQIIEKLTGARLTTTFCRIGGLEKDIYPDFVKEVKLVCKGLKPAIEEFNSLLLKNKIFLGRTEGIGGISAENAIAYGYTGPNLRAAGVDWDVRKDEPYLFYDKVDFDIPIGEDGSVLHRSLVRMEEMRQSIRIIEQLVDGIPSGPWHADLPHAYLPEKHKVYNNMEELIYHFKIIMHGVKVPPGEYYMATEAANGELGFYIVSEGEKSPWRVHVRRPCFWYYQSFAELVRGGLLADSVATMSSLNVIAGELDC.

This sequence belongs to the complex I 49 kDa subunit family. As to quaternary structure, NDH-1 is composed of 14 different subunits. Subunits NuoB, C, D, E, F, and G constitute the peripheral sector of the complex.

Its subcellular location is the cell inner membrane. It carries out the reaction a quinone + NADH + 5 H(+)(in) = a quinol + NAD(+) + 4 H(+)(out). Functionally, NDH-1 shuttles electrons from NADH, via FMN and iron-sulfur (Fe-S) centers, to quinones in the respiratory chain. The immediate electron acceptor for the enzyme in this species is believed to be ubiquinone. Couples the redox reaction to proton translocation (for every two electrons transferred, four hydrogen ions are translocated across the cytoplasmic membrane), and thus conserves the redox energy in a proton gradient. The protein is NADH-quinone oxidoreductase subunit D of Leptospira interrogans serogroup Icterohaemorrhagiae serovar copenhageni (strain Fiocruz L1-130).